Consider the following 504-residue polypeptide: ATP synthase subunit alpha, chloroplastic (504 aa).

170-177 is an ATP binding site; it reads GDRQTGKT.

This sequence belongs to the ATPase alpha/beta chains family. As to quaternary structure, F-type ATPases have 2 components, CF(1) - the catalytic core - and CF(0) - the membrane proton channel. CF(1) has five subunits: alpha(3), beta(3), gamma(1), delta(1), epsilon(1). CF(0) has four main subunits: a, b, b' and c.

Its subcellular location is the plastid. It localises to the chloroplast thylakoid membrane. The enzyme catalyses ATP + H2O + 4 H(+)(in) = ADP + phosphate + 5 H(+)(out). Functionally, produces ATP from ADP in the presence of a proton gradient across the membrane. The alpha chain is a regulatory subunit. In Ostreococcus tauri, this protein is ATP synthase subunit alpha, chloroplastic.